The following is a 379-amino-acid chain: Heme A synthase (379 aa).

Residues 1–28 (MAGSRSIFEEVQDSQKPAAMPGGVSRDR) form a disordered region. 8 helical membrane-spanning segments follow: residues 35-55 (VRVF…IGGL), 124-144 (FLGV…SVPV), 150-170 (LLLL…MVHS), 183-203 (RLAV…WYIL), 227-247 (ATGL…VAGI), 287-307 (FFHR…WIMA), 318-338 (AFDW…MTVM), and 341-361 (SPWY…TLIL). Position 289 (H289) interacts with heme. Heme is bound at residue H349.

This sequence belongs to the COX15/CtaA family. Type 2 subfamily. As to quaternary structure, interacts with CtaB. Requires heme b as cofactor.

It localises to the cell membrane. It carries out the reaction Fe(II)-heme o + 2 A + H2O = Fe(II)-heme a + 2 AH2. The protein operates within porphyrin-containing compound metabolism; heme A biosynthesis; heme A from heme O: step 1/1. Functionally, catalyzes the conversion of heme O to heme A by two successive hydroxylations of the methyl group at C8. The first hydroxylation forms heme I, the second hydroxylation results in an unstable dihydroxymethyl group, which spontaneously dehydrates, resulting in the formyl group of heme A. The sequence is that of Heme A synthase from Jannaschia sp. (strain CCS1).